Reading from the N-terminus, the 132-residue chain is MLIGAPSNMRLRGALELLWRRLLHGLMQLRLVLKMHICSQLNHAIKRRAFLKTKGGKNALHGCLDTVINLQESILAGIRLVPVLPILLDYVLYNISLGGMTFADFLEVLLHFSALEGLCKGVFEADGLEAVH.

This is an uncharacterized protein from Saccharomyces cerevisiae (strain ATCC 204508 / S288c) (Baker's yeast).